A 107-amino-acid polypeptide reads, in one-letter code: Translation initiation factor IF-1, chloroplastic (107 aa).

The 76-residue stretch at 8–83 folds into the S1-like domain; it reads REKKNPREAK…SKGRIIYRLP (76 aa). The segment at 81–107 is disordered; sequence RLPHKDSKRTEDSKDTEDLKDTKDSKD. Over residues 83–107 the composition is skewed to basic and acidic residues; it reads PHKDSKRTEDSKDTEDLKDTKDSKD.

This sequence belongs to the IF-1 family. As to quaternary structure, component of the 30S ribosomal translation pre-initiation complex which assembles on the 30S ribosome in the order IF-2 and IF-3, IF-1 and N-formylmethionyl-tRNA(fMet); mRNA recruitment can occur at any time during PIC assembly.

It is found in the plastid. It localises to the chloroplast. Functionally, one of the essential components for the initiation of protein synthesis. Stabilizes the binding of IF-2 and IF-3 on the 30S subunit to which N-formylmethionyl-tRNA(fMet) subsequently binds. Helps modulate mRNA selection, yielding the 30S pre-initiation complex (PIC). Upon addition of the 50S ribosomal subunit IF-1, IF-2 and IF-3 are released leaving the mature 70S translation initiation complex. The protein is Translation initiation factor IF-1, chloroplastic of Saccharum hybrid (Sugarcane).